Here is a 379-residue protein sequence, read N- to C-terminus: Cell cycle checkpoint control protein RAD9A (379 aa).

At Y17 the chain carries Phosphotyrosine. The tract at residues 40-80 (FLFAPLFFQQYQAATPGQDLLRCKILMKSFLSVFRSLAMLE) is possesses 3'-5' exonuclease activity. The segment at 255–379 (SDTDSHSQDL…VLAEDSEGEG (125 aa)) is sufficient for interaction with ABL1. Residues 257–271 (TDSHSQDLGSPERHQ) show a composition bias toward basic and acidic residues. 2 disordered regions span residues 257-289 (TDSH…DFAN) and 308-379 (SRVL…EGEG). S261, S266, S317, S330, S363, S368, and S375 each carry phosphoserine.

The protein belongs to the rad9 family. As to quaternary structure, component of the toroidal 9-1-1 (RAD9-RAD1-HUS1) complex, composed of RAD9A, RAD1 and HUS1. The 9-1-1 complex associates with LIG1, POLB, FEN1, RAD17, HDAC1, RPA1 and RPA2. The 9-1-1 complex associates with the RAD17-RFC complex. RAD9A interacts with BCL2L1, FEN1, RAD9B, ABL1, RPA1, ATAD5 and RPA2. Interacts with DNAJC7. Interacts (when phosphorylated) with TOPBP1. Post-translationally, constitutively phosphorylated on serine and threonine amino acids in absence of DNA damage. Hyperphosphorylated by PRKCD and ABL1 upon DNA damage. Its phosphorylation by PRKCD may be required for the formation of the 9-1-1 complex. Phosphorylated at Ser-330 and Ser-375 by CK2, promoting interaction with TOPBP1.

Its subcellular location is the nucleus. It carries out the reaction Exonucleolytic cleavage in the 3'- to 5'-direction to yield nucleoside 5'-phosphates.. Component of the 9-1-1 cell-cycle checkpoint response complex that plays a major role in DNA repair. The 9-1-1 complex is recruited to DNA lesion upon damage by the RAD17-replication factor C (RFC) clamp loader complex. Acts then as a sliding clamp platform on DNA for several proteins involved in long-patch base excision repair (LP-BER). The 9-1-1 complex stimulates DNA polymerase beta (POLB) activity by increasing its affinity for the 3'-OH end of the primer-template and stabilizes POLB to those sites where LP-BER proceeds; endonuclease FEN1 cleavage activity on substrates with double, nick, or gap flaps of distinct sequences and lengths; and DNA ligase I (LIG1) on long-patch base excision repair substrates. The 9-1-1 complex is necessary for the recruitment of RHNO1 to sites of double-stranded breaks (DSB) occurring during the S phase. RAD9A possesses 3'-&gt;5' double stranded DNA exonuclease activity. In Macaca fascicularis (Crab-eating macaque), this protein is Cell cycle checkpoint control protein RAD9A (RAD9A).